The primary structure comprises 653 residues: Mannosyl-oligosaccharide 1,2-alpha-mannosidase IA (653 aa).

The Cytoplasmic portion of the chain corresponds to 1-41 (MPVGGLLPLFSSPAGGVLGGGLGGGGGRKGSGPAALRLTEK). Residues 42–62 (FVLLLVFSAFITLCFGAIFFL) form a helical; Signal-anchor for type II membrane protein membrane-spanning segment. At 63-653 (PDSSKLLSGV…DKKEVEIREE (591 aa)) the chain is on the lumenal side. The tract at residues 81 to 116 (QPAADHKPGPGARAEDAAEGRARRREEGAPGDPEAA) is disordered. The segment covering 84-108 (ADHKPGPGARAEDAAEGRARRREEG) has biased composition (basic and acidic residues). An intrachain disulfide couples Cys-476 to Cys-508. Asn-513 carries an N-linked (GlcNAc...) asparagine glycan. The Proton donor role is filled by Glu-522.

This sequence belongs to the glycosyl hydrolase 47 family. Ca(2+) serves as cofactor.

It is found in the golgi apparatus membrane. The enzyme catalyses N(4)-(alpha-D-Man-(1-&gt;2)-alpha-D-Man-(1-&gt;2)-alpha-D-Man-(1-&gt;3)-[alpha-D-Man-(1-&gt;2)-alpha-D-Man-(1-&gt;3)-[alpha-D-Man-(1-&gt;2)-alpha-D-Man-(1-&gt;6)]-alpha-D-Man-(1-&gt;6)]-beta-D-Man-(1-&gt;4)-beta-D-GlcNAc-(1-&gt;4)-beta-D-GlcNAc)-L-asparaginyl-[protein] (N-glucan mannose isomer 9A1,2,3B1,2,3) + 4 H2O = N(4)-(alpha-D-Man-(1-&gt;3)-[alpha-D-Man-(1-&gt;3)-[alpha-D-Man-(1-&gt;6)]-alpha-D-Man-(1-&gt;6)]-beta-D-Man-(1-&gt;4)-beta-D-GlcNAc-(1-&gt;4)-beta-D-GlcNAc)-L-asparaginyl-[protein] (N-glucan mannose isomer 5A1,2) + 4 beta-D-mannose. The catalysed reaction is N(4)-(alpha-D-Man-(1-&gt;2)-alpha-D-Man-(1-&gt;2)-alpha-D-Man-(1-&gt;3)-[alpha-D-Man-(1-&gt;3)-[alpha-D-Man-(1-&gt;2)-alpha-D-Man-(1-&gt;6)]-alpha-D-Man-(1-&gt;6)]-beta-D-Man-(1-&gt;4)-beta-D-GlcNAc-(1-&gt;4)-beta-D-GlcNAc)-L-asparaginyl-[protein] (N-glucan mannose isomer 8A1,2,3B1,3) + 3 H2O = N(4)-(alpha-D-Man-(1-&gt;3)-[alpha-D-Man-(1-&gt;3)-[alpha-D-Man-(1-&gt;6)]-alpha-D-Man-(1-&gt;6)]-beta-D-Man-(1-&gt;4)-beta-D-GlcNAc-(1-&gt;4)-beta-D-GlcNAc)-L-asparaginyl-[protein] (N-glucan mannose isomer 5A1,2) + 3 beta-D-mannose. The protein operates within protein modification; protein glycosylation. With respect to regulation, inhibited by both 1-deoxymannojirimycin and kifunensine. In terms of biological role, involved in the maturation of Asn-linked oligosaccharides. Progressively trim alpha-1,2-linked mannose residues from Man(9)GlcNAc(2) to produce Man(5)GlcNAc(2). This chain is Mannosyl-oligosaccharide 1,2-alpha-mannosidase IA (MAN1A1), found in Homo sapiens (Human).